Here is a 186-residue protein sequence, read N- to C-terminus: MSKTDWNASGLSRPSPSAHWPSRKLWQHGQKYQTTQDRSEPPAGKRRQAVRVSANHASQQLDQLKAVHLASAVRDLERAMTTLKLWESPQEISRHQALGYSVIMFMITAVKRLRESKMLTLSWFNQALMVIAPYQEETMNLKTAMWILANLIPRDMLSLTGDLLPSLWGSGLLMLKLQKEGRSTSS.

The span at 1–15 shows a compositional bias: polar residues; the sequence is MSKTDWNASGLSRPS. Residues 1 to 44 are disordered; sequence MSKTDWNASGLSRPSPSAHWPSRKLWQHGQKYQTTQDRSEPPAG.

This sequence belongs to the morbillivirus protein C family. Interacts with the phosphoprotein (via C-terminus); this interaction allows C to associate with the ribonucleocapsid.

The protein resides in the host nucleus. Its subcellular location is the host cytoplasmic vesicle. Ribonucleocapsid-associated protein that interacts with the phosphoprotein (P), thereby increasing replication accuracy and processivity of the polymerase complex. In Homo sapiens (Human), this protein is Protein C (P/V/C).